We begin with the raw amino-acid sequence, 181 residues long: Protein Syd (181 aa).

It belongs to the Syd family.

It localises to the cell inner membrane. In terms of biological role, interacts with the SecY protein in vivo. May bind preferentially to an uncomplexed state of SecY, thus functioning either as a chelating agent for excess SecY in the cell or as a regulatory factor that negatively controls the translocase function. This chain is Protein Syd, found in Alteromonas mediterranea (strain DSM 17117 / CIP 110805 / LMG 28347 / Deep ecotype).